We begin with the raw amino-acid sequence, 247 residues long: tRNA pseudouridine synthase A (247 aa).

Asp53 (nucleophile) is an active-site residue. Tyr112 contacts substrate.

It belongs to the tRNA pseudouridine synthase TruA family. As to quaternary structure, homodimer.

The catalysed reaction is uridine(38/39/40) in tRNA = pseudouridine(38/39/40) in tRNA. Formation of pseudouridine at positions 38, 39 and 40 in the anticodon stem and loop of transfer RNAs. This is tRNA pseudouridine synthase A from Anaplasma marginale (strain Florida).